A 394-amino-acid polypeptide reads, in one-letter code: Teichoic acid poly(glycerol phosphate) polymerase (394 aa).

Belongs to the CDP-glycerol glycerophosphotransferase family.

The protein localises to the cell membrane. It carries out the reaction 4-O-[(2R)-glycerylphospho]-N-acetyl-beta-D-mannosaminyl-(1-&gt;4)-N-acetyl-alpha-D-glucosaminyl di-trans,octa-cis-undecaprenyl diphosphate + n CDP-glycerol = 4-O-{[(2R)-1-glycerylphospho](n)-(2R)-1-glycerylphospho}-N-acetyl-beta-D-mannosaminyl-(1-&gt;4)-N-acetyl-alpha-D-glucosaminyl undecaprenyl diphosphate + n CMP + n H(+). In terms of biological role, catalyzes the addition of further 2-8 glycerol phosphate units from CDP-glycerol to the single glycerol phosphate unit bound to the prenolpyrophosphate-linked disaccharide. The function in the cell is unknown since the product is not part of the poly(ribitol phosphate) teichoic acid found in the cell walls. This Bacillus spizizenii (strain ATCC 23059 / NRRL B-14472 / W23) (Bacillus subtilis subsp. spizizenii) protein is Teichoic acid poly(glycerol phosphate) polymerase (tarF).